A 99-amino-acid polypeptide reads, in one-letter code: Leydig cell tumor 10 kDa protein homolog (99 aa).

The interval 1–36 (MAQGQRKFQAHKPAKSKTAAAASEKNRGPRKGGRVI) is disordered.

The protein belongs to the UPF0390 family.

Functionally, may have a potential role in hypercalcemia of malignancy. The chain is Leydig cell tumor 10 kDa protein homolog (C19orf53) from Homo sapiens (Human).